Consider the following 80-residue polypeptide: Clavanin-A (80 aa).

Positions 1 to 19 (MKTTILILLILGLGINAKS) are cleaved as a signal peptide. Residues 20-29 (LEERKSEEEK) constitute a propeptide that is removed on maturation. F52 bears the Phenylalanine amide mark. Positions 54 to 80 (DDQQDNGKFYGHYAEDNGKHWYDTGDQ) are excised as a propeptide.

The protein localises to the secreted. Its function is as follows. Has antimicrobial activity. In Styela clava (Sea squirt), this protein is Clavanin-A.